Reading from the N-terminus, the 227-residue chain is UPF0173 metal-dependent hydrolase BCAH187_A4741 (227 aa).

The protein belongs to the UPF0173 family.

The protein is UPF0173 metal-dependent hydrolase BCAH187_A4741 of Bacillus cereus (strain AH187).